The sequence spans 499 residues: tRNA-specific adenosine deaminase 1 (499 aa).

An A to I editase domain is found at 63–498 (SMGTGTKCIG…IRNPPDYHQF (436 aa)). A Zn(2+)-binding site is contributed by H87. The Proton donor role is filled by E89. 2 residues coordinate 1D-myo-inositol hexakisphosphate: R93 and R94. C142 is a binding site for Zn(2+). Disordered stretches follow at residues 170 to 194 (PVQETENLEDSKDKRNCEDPASPVA) and 212 to 237 (HHGTQESGPVKPDVSSSDLTKEEPDA). Residues 178-187 (EDSKDKRNCE) show a composition bias toward basic and acidic residues. At S191 the chain carries Phosphoserine. C294 is a Zn(2+) binding site. Residues K297, R300, K430, and K466 each contribute to the 1D-myo-inositol hexakisphosphate site.

Belongs to the ADAT1 family. 1D-myo-inositol hexakisphosphate is required as a cofactor.

The catalysed reaction is adenosine(37) in tRNA(Ala) + H2O + H(+) = inosine(37) in tRNA(Ala) + NH4(+). Its function is as follows. Specifically deaminates adenosine-37 to inosine in tRNA-Ala. In Mus musculus (Mouse), this protein is tRNA-specific adenosine deaminase 1 (Adat1).